A 236-amino-acid polypeptide reads, in one-letter code: 2,3,4,5-tetrahydropyridine-2,6-dicarboxylate N-acetyltransferase (236 aa).

Belongs to the transferase hexapeptide repeat family. DapH subfamily.

The enzyme catalyses (S)-2,3,4,5-tetrahydrodipicolinate + acetyl-CoA + H2O = L-2-acetamido-6-oxoheptanedioate + CoA. The protein operates within amino-acid biosynthesis; L-lysine biosynthesis via DAP pathway; LL-2,6-diaminopimelate from (S)-tetrahydrodipicolinate (acetylase route): step 1/3. Its function is as follows. Catalyzes the transfer of an acetyl group from acetyl-CoA to tetrahydrodipicolinate. This chain is 2,3,4,5-tetrahydropyridine-2,6-dicarboxylate N-acetyltransferase, found in Bacillus velezensis (strain DSM 23117 / BGSC 10A6 / LMG 26770 / FZB42) (Bacillus amyloliquefaciens subsp. plantarum).